Reading from the N-terminus, the 336-residue chain is MSRVTLSRYLIEQTRSNNTPADLRFLIEVVARACKEISHAVSKGALGGVLGSMGTENVQGEVQKKLDVISNEILLEANEWGGHLAGMASEEMDNAYQIPGKYPKGAYLLVFDPLDGSSNIDINAPVGTIFSVLRCPNEYLSQNEALNEKAFLQPGTEQVAAGYAIYGPQTMLVLTLGDGVKGFTLDREMGSFVLTHEDITIPASTQEFAINMSNQRHWEEPVTRYVGELMAGEEGPLKKNFNMRWVAAMVADVHRILTRGGLFMYPRDSREPSKPGKLRLMYEANPMSFLVEQAGGASTDGHQRILDIQPEGLHQRVAVFLGSKEEVERVTAYHKK.

Mg(2+) is bound by residues Glu90, Asp112, Leu114, and Asp115. Substrate contacts are provided by residues Asp115 to Ser118, Asn211, and Lys277. Glu283 provides a ligand contact to Mg(2+).

Belongs to the FBPase class 1 family. As to quaternary structure, homotetramer. Mg(2+) is required as a cofactor.

The protein localises to the cytoplasm. The enzyme catalyses beta-D-fructose 1,6-bisphosphate + H2O = beta-D-fructose 6-phosphate + phosphate. Its pathway is carbohydrate biosynthesis; gluconeogenesis. This is Fructose-1,6-bisphosphatase class 1 from Pseudomonas fluorescens (strain SBW25).